The following is a 140-amino-acid chain: MRHRVGGRKLQRTSSHRLALFRNQSAALIKHEQIITTLAKARELRPYTEKLITLAKKGGLANRRLAHSRLLDDTQLKKLFDVLAERYKDRNGGYTRIIKAGIRASDAAQMAVIELVDRDTTAKGQDSGPVQVEEQENEEA.

The tract at residues Asp119–Ala140 is disordered.

It belongs to the bacterial ribosomal protein bL17 family. Part of the 50S ribosomal subunit. Contacts protein L32.

The sequence is that of Large ribosomal subunit protein bL17 from Zymomonas mobilis subsp. mobilis (strain ATCC 31821 / ZM4 / CP4).